The sequence spans 535 residues: UDP-N-acetylmuramoyl-L-alanyl-D-glutamate--2,6-diaminopimelate ligase (535 aa).

Residue Leu-67 coordinates UDP-N-acetyl-alpha-D-muramoyl-L-alanyl-D-glutamate. Gly-153–Thr-159 serves as a coordination point for ATP. Residues Thr-195–Thr-196, Ser-222, and Arg-230 contribute to the UDP-N-acetyl-alpha-D-muramoyl-L-alanyl-D-glutamate site. Position 262 is an N6-carboxylysine (Lys-262). Residues Arg-424, Asp-448 to Arg-451, Gly-502, and Glu-506 contribute to the meso-2,6-diaminopimelate site. Residues Asp-448–Arg-451 carry the Meso-diaminopimelate recognition motif motif.

It belongs to the MurCDEF family. MurE subfamily. Mg(2+) serves as cofactor. In terms of processing, carboxylation is probably crucial for Mg(2+) binding and, consequently, for the gamma-phosphate positioning of ATP.

The protein localises to the cytoplasm. It catalyses the reaction UDP-N-acetyl-alpha-D-muramoyl-L-alanyl-D-glutamate + meso-2,6-diaminopimelate + ATP = UDP-N-acetyl-alpha-D-muramoyl-L-alanyl-gamma-D-glutamyl-meso-2,6-diaminopimelate + ADP + phosphate + H(+). The protein operates within cell wall biogenesis; peptidoglycan biosynthesis. Its function is as follows. Catalyzes the addition of meso-diaminopimelic acid to the nucleotide precursor UDP-N-acetylmuramoyl-L-alanyl-D-glutamate (UMAG) in the biosynthesis of bacterial cell-wall peptidoglycan. This Mycobacterium bovis (strain ATCC BAA-935 / AF2122/97) protein is UDP-N-acetylmuramoyl-L-alanyl-D-glutamate--2,6-diaminopimelate ligase.